A 382-amino-acid polypeptide reads, in one-letter code: Protein PEP-RELATED DEVELOPMENT ARRESTED 1 homolog, chloroplastic (382 aa).

The N-terminal 44 residues, 1–44 (MAILPLSISHSLTSALSATSSGIGRPVARLLHPRVPSRPTVICL), are a transit peptide targeting the chloroplast.

Its subcellular location is the plastid. It localises to the chloroplast stroma. The protein localises to the chloroplast nucleoid. Its function is as follows. Plays an essential role in early steps of chloroplast development. May be involved in the redox control of plastid gene expression by maintening the redox state around chloroplast nucleoids. May positively regulate plastid-encoded RNA polymerase (PEP) activity. In Oryza sativa subsp. japonica (Rice), this protein is Protein PEP-RELATED DEVELOPMENT ARRESTED 1 homolog, chloroplastic.